The sequence spans 442 residues: Decapping and exoribonuclease protein 1 (442 aa).

The segment covering 31–40 (QSKLCKEKTT) has biased composition (basic and acidic residues). Residues 31-56 (QSKLCKEKTTSDSSSSRKPSQQRDNY) are disordered. The segment covering 41 to 53 (SDSSSSRKPSQQR) has biased composition (low complexity). R101 contacts substrate. E255 contacts a divalent metal cation. E293 contacts substrate. A divalent metal cation is bound by residues D295, E306, and L307. Substrate is bound by residues K308 and Q330.

The protein belongs to the DXO/Dom3Z family. Requires a divalent metal cation as cofactor.

The protein localises to the cytoplasm. The enzyme catalyses a 5'-end NAD(+)-phospho-ribonucleoside in mRNA + H2O = a 5'-end phospho-ribonucleoside in mRNA + NAD(+) + H(+). It carries out the reaction a 5'-end (N(7)-methyl 5'-triphosphoguanosine)-ribonucleoside-ribonucleotide in mRNA + H2O = a (N(7)-methyl 5'-triphosphoguanosine)-nucleoside + a 5'-end phospho-ribonucleoside in mRNA + H(+). Its function is as follows. Decapping enzyme for NAD-capped RNAs: specifically hydrolyzes the nicotinamide adenine dinucleotide (NAD) cap from a subset of RNAs by removing the entire NAD moiety from the 5'-end of an NAD-capped RNA. The NAD-cap is present at the 5'-end of some RNAs and snoRNAs. In contrast to the canonical 5'-end N7 methylguanosine (m7G) cap, the NAD cap promotes mRNA decay. Also acts as a non-canonical decapping enzyme that removes the entire cap structure of m7G capped or incompletely capped RNAs. Has decapping activity toward incomplete 5'-end m7G cap mRNAs such as unmethylated 5'-end-capped RNA (cap0), while it has no activity toward 2'-O-ribose methylated m7G cap (cap1). Also has 5'-3' exonuclease activity. The protein is Decapping and exoribonuclease protein 1 (DXO1) of Saccharomyces cerevisiae (strain ATCC 204508 / S288c) (Baker's yeast).